The chain runs to 406 residues: Secretion apparatus protein BsaZ (406 aa).

4 helical membrane passes run 28-48 (IVAL…VDLT), 80-100 (IAAP…LVQS), 137-157 (ALLY…LYHA), and 175-195 (IVLT…VLIL). Positions 341–406 (AANRGGPPPE…APARTGDQNA (66 aa)) are disordered. Low complexity predominate over residues 370 to 399 (DACADNAFPDDAPPGAAAPNAGSPDGGAPA).

Belongs to the type III secretion exporter family.

The protein resides in the cell membrane. In terms of biological role, part of the bsa type III secretion system, is involved in the intracellular replication of invading bacteria inside the host cell. Probably necessary for the lysis of the vacuole membrane and escape into the host cell cytoplasm. The sequence is that of Secretion apparatus protein BsaZ (bsaZ) from Burkholderia pseudomallei (strain 668).